Consider the following 327-residue polypeptide: Biotin synthase (327 aa).

Positions 42–268 constitute a Radical SAM core domain; the sequence is NKVQKASLLS…VMPASTVRLS (227 aa). C57, C61, and C64 together coordinate [4Fe-4S] cluster. Positions 102, 134, 194, and 266 each coordinate [2Fe-2S] cluster.

Belongs to the radical SAM superfamily. Biotin synthase family. In terms of assembly, homodimer. Requires [4Fe-4S] cluster as cofactor. [2Fe-2S] cluster serves as cofactor.

The enzyme catalyses (4R,5S)-dethiobiotin + (sulfur carrier)-SH + 2 reduced [2Fe-2S]-[ferredoxin] + 2 S-adenosyl-L-methionine = (sulfur carrier)-H + biotin + 2 5'-deoxyadenosine + 2 L-methionine + 2 oxidized [2Fe-2S]-[ferredoxin]. It functions in the pathway cofactor biosynthesis; biotin biosynthesis; biotin from 7,8-diaminononanoate: step 2/2. Functionally, catalyzes the conversion of dethiobiotin (DTB) to biotin by the insertion of a sulfur atom into dethiobiotin via a radical-based mechanism. The protein is Biotin synthase of Rhizobium rhizogenes (strain K84 / ATCC BAA-868) (Agrobacterium radiobacter).